The primary structure comprises 277 residues: Large ribosomal subunit protein uL2 (277 aa).

3 disordered regions span residues 1–20 (MGIR…SVSD), 27–55 (TQPE…RHRG), and 207–277 (KAGR…RNQS). Residues 27–48 (TQPEKSLTTYKHSSQGRNNRGV) show a composition bias toward polar residues. Composition is skewed to basic residues over residues 207-220 (KAGR…RPHV) and 259-277 (TRNR…RNQS).

It belongs to the universal ribosomal protein uL2 family. As to quaternary structure, part of the 50S ribosomal subunit. Forms a bridge to the 30S subunit in the 70S ribosome.

Functionally, one of the primary rRNA binding proteins. Required for association of the 30S and 50S subunits to form the 70S ribosome, for tRNA binding and peptide bond formation. It has been suggested to have peptidyltransferase activity; this is somewhat controversial. Makes several contacts with the 16S rRNA in the 70S ribosome. The polypeptide is Large ribosomal subunit protein uL2 (Gloeothece citriformis (strain PCC 7424) (Cyanothece sp. (strain PCC 7424))).